The primary structure comprises 387 residues: Alpha-sarcoglycan (387 aa).

The N-terminal stretch at 1–24 (MAAAALLWLPLLVGCLAGPGGTEA) is a signal peptide. Residues 25-290 (QQTTLYPLVG…ATARDFLADA (266 aa)) lie on the Extracellular side of the membrane. Residues Asn-174 and Asn-246 are each glycosylated (N-linked (GlcNAc...) asparagine). The helical transmembrane segment at 291–311 (LVTLLVPLLVALLLALLLAYI) threads the bilayer. Residues 312 to 387 (MCCRREGRLK…AQVPLILDQH (76 aa)) are Cytoplasmic-facing. Phosphoserine is present on Ser-377.

It belongs to the sarcoglycan alpha/epsilon family. As to quaternary structure, cross-link to form 2 major subcomplexes: one consisting of SGCB, SGCD and SGCG and the other consisting of SGCB and SGCD. The association between SGCB and SGCG is particularly strong while SGCA is loosely associated with the other sarcoglycans. Interacts with the syntrophin SNTA1.

It localises to the cell membrane. The protein resides in the sarcolemma. It is found in the cytoplasm. Its subcellular location is the cytoskeleton. Functionally, component of the sarcoglycan complex, a subcomplex of the dystrophin-glycoprotein complex which forms a link between the F-actin cytoskeleton and the extracellular matrix. In Oryctolagus cuniculus (Rabbit), this protein is Alpha-sarcoglycan (SGCA).